A 404-amino-acid polypeptide reads, in one-letter code: Keratin, type I microfibrillar, 47.6 kDa (404 aa).

The tract at residues 1–56 is head; it reads MSFNFCLPNLSFRSSCSSRPCVPSSCCGTTLPGACNIPASVGSCNWFCEGSFNGNE. The 312-residue stretch at 56 to 367 folds into the IF rod domain; the sequence is EKETMQFLND…GLLDSEDCKL (312 aa). The interval 57–91 is coil 1A; it reads KETMQFLNDRLASYLEKVRQLERENAELERRILER. Residues 92–102 are linker 1; that stretch reads SQQQEPLVCPN. Residues 103-203 form a coil 1B region; the sequence is YQSYFRTIEE…HEQEVNTLRS (101 aa). The tract at residues 204 to 219 is linker 12; sequence QLGDRLNVEVDAAPTV. The interval 220-363 is coil 2; the sequence is DLNHVLNETR…NTYRGLLDSE (144 aa). The tract at residues 364–404 is tail; it reads DCKLPCNPCATTNTCGKPIGPCISNPCVSRTRCGPCNTFVH.

This sequence belongs to the intermediate filament family.

Its function is as follows. Wool microfibrillar keratin. This Ovis aries (Sheep) protein is Keratin, type I microfibrillar, 47.6 kDa.